A 209-amino-acid polypeptide reads, in one-letter code: High frequency lysogenization protein HflD homolog (209 aa).

Belongs to the HflD family.

The protein localises to the cytoplasm. It is found in the cell inner membrane. The chain is High frequency lysogenization protein HflD homolog from Marinomonas sp. (strain MWYL1).